The chain runs to 114 residues: Putative antiporter subunit mnhC2 (114 aa).

Transmembrane regions (helical) follow at residues 3 to 23 (LILLLVIGFLVFIGTYMILSI), 28 to 48 (IVIGISIYTHAGNLIIMSMGT), and 72 to 92 (AIVLTAIVIGFGMTAFLLVLV).

This sequence belongs to the CPA3 antiporters (TC 2.A.63) subunit C family. In terms of assembly, may form a heterooligomeric complex that consists of seven subunits: mnhA2, mnhB2, mnhC2, mnhD2, mnhE2, mnhF2 and mnhG2.

The protein resides in the cell membrane. The protein is Putative antiporter subunit mnhC2 (mnhC2) of Staphylococcus aureus (strain Mu3 / ATCC 700698).